The primary structure comprises 349 residues: ATPase GET3 (349 aa).

Position 26–33 (26–33) interacts with ATP; the sequence is KGGVGKTT. Asp57 is a catalytic residue. 2 residues coordinate ATP: Glu240 and Asn267. Cys280 and Cys283 together coordinate Zn(2+).

It belongs to the arsA ATPase family. Homodimer. Component of the Golgi to ER traffic (GET) complex, which is composed of GET1, GET2 and GET3. Within the complex, GET1 and GET2 form a heterotetramer which is stabilized by phosphatidylinositol binding and which binds to the GET3 homodimer. Interacts with the chloride channel protein GEF1.

It is found in the cytoplasm. Its subcellular location is the endoplasmic reticulum. The protein resides in the golgi apparatus. Functionally, ATPase required for the post-translational delivery of tail-anchored (TA) proteins to the endoplasmic reticulum. Recognizes and selectively binds the transmembrane domain of TA proteins in the cytosol. This complex then targets to the endoplasmic reticulum by membrane-bound receptors GET1 and GET2, where the tail-anchored protein is released for insertion. This process is regulated by ATP binding and hydrolysis. ATP binding drives the homodimer towards the closed dimer state, facilitating recognition of newly synthesized TA membrane proteins. ATP hydrolysis is required for insertion. Subsequently, the homodimer reverts towards the open dimer state, lowering its affinity for the GET1-GET2 receptor, and returning it to the cytosol to initiate a new round of targeting. Cooperates with the HDEL receptor ERD2 to mediate the ATP-dependent retrieval of resident ER proteins that contain a C-terminal H-D-E-L retention signal from the Golgi to the ER. Involved in low-level resistance to the oxyanions arsenite and arsenate, and in heat tolerance. The protein is ATPase GET3 of Kluyveromyces lactis (strain ATCC 8585 / CBS 2359 / DSM 70799 / NBRC 1267 / NRRL Y-1140 / WM37) (Yeast).